Consider the following 148-residue polypeptide: Macrodomain Ter protein (148 aa).

The protein belongs to the MatP family. As to quaternary structure, homodimer.

Its subcellular location is the cytoplasm. In terms of biological role, required for spatial organization of the terminus region of the chromosome (Ter macrodomain) during the cell cycle. Prevents early segregation of duplicated Ter macrodomains during cell division. Binds specifically to matS, which is a 13 bp signature motif repeated within the Ter macrodomain. This Haemophilus ducreyi (strain 35000HP / ATCC 700724) protein is Macrodomain Ter protein.